The following is a 91-amino-acid chain: DNA-binding protein HU (91 aa).

Belongs to the bacterial histone-like protein family.

Histone-like DNA-binding protein which is capable of wrapping DNA to stabilize it, and thus to prevent its denaturation under extreme environmental conditions. Also seems to act as a fortuitous virulence factor in delayed sequelae by binding to heparan sulfate-proteoglycans in the extracellular matrix of target organs and acting as a nidus for in situ immune complex formation. The protein is DNA-binding protein HU (hup) of Streptococcus downei (Streptococcus sobrinus).